The chain runs to 55 residues: Large ribosomal subunit protein bL33 (55 aa).

It belongs to the bacterial ribosomal protein bL33 family.

This is Large ribosomal subunit protein bL33 from Burkholderia cenocepacia (strain ATCC BAA-245 / DSM 16553 / LMG 16656 / NCTC 13227 / J2315 / CF5610) (Burkholderia cepacia (strain J2315)).